Here is an 891-residue protein sequence, read N- to C-terminus: Alanine--tRNA ligase (891 aa).

Residues H564, H568, C681, and H685 each coordinate Zn(2+).

It belongs to the class-II aminoacyl-tRNA synthetase family. It depends on Zn(2+) as a cofactor.

Its subcellular location is the cytoplasm. It catalyses the reaction tRNA(Ala) + L-alanine + ATP = L-alanyl-tRNA(Ala) + AMP + diphosphate. Catalyzes the attachment of alanine to tRNA(Ala) in a two-step reaction: alanine is first activated by ATP to form Ala-AMP and then transferred to the acceptor end of tRNA(Ala). Also edits incorrectly charged Ser-tRNA(Ala) and Gly-tRNA(Ala) via its editing domain. The sequence is that of Alanine--tRNA ligase from Methylorubrum populi (strain ATCC BAA-705 / NCIMB 13946 / BJ001) (Methylobacterium populi).